A 318-amino-acid chain; its full sequence is HTH-type transcriptional regulatory protein TyrR (318 aa).

Residues 15–239 form the Sigma-54 factor interaction; truncated domain; that stretch reads FIVQSEAMKS…LYNTLYRACS (225 aa). Residues 43 to 50 and 101 to 110 each bind ATP; these read GETGSGKD and ANKGTVLLDG. The H-T-H motif DNA-binding region spans 292–312; it reads STRKLAQRLGVSHTAIANKLK.

Homodimer. In presence of tyrosine (or high concentrations of phenylalanine or tryptophan) and ATP, it self-associates to form a hexamer.

It is found in the cytoplasm. With respect to regulation, the DNA binding ability is drastically reduced in the presence of ATP. Tyrosine further reduces the binding affinity of TyrR in the presence of ATP. Its function is as follows. Transcriptional regulator of the TyrR regulon, which includes a number of genes coding for proteins involved in the biosynthesis or transport of the three aromatic amino acids, phenylalanine, tyrosine and tryptophan. These three aromatic amino acids act as effectors which bind to the TyrR protein to form an active regulatory protein. Acts by binding specifically to TyrR boxes in the promoter region of the target genes. Can efficiently repress the transcription of the aroF promoter, but lacks the ability to function as a transcriptional activator. This chain is HTH-type transcriptional regulatory protein TyrR, found in Haemophilus influenzae (strain ATCC 51907 / DSM 11121 / KW20 / Rd).